Reading from the N-terminus, the 335-residue chain is Fructose-1,6-bisphosphatase class 1 (335 aa).

Glutamate 94, aspartate 113, leucine 115, and aspartate 116 together coordinate Mg(2+). Substrate-binding positions include 116–119 (DGSS), asparagine 208, and lysine 274. Residue glutamate 280 coordinates Mg(2+).

The protein belongs to the FBPase class 1 family. As to quaternary structure, homotetramer. It depends on Mg(2+) as a cofactor.

Its subcellular location is the cytoplasm. It carries out the reaction beta-D-fructose 1,6-bisphosphate + H2O = beta-D-fructose 6-phosphate + phosphate. The protein operates within carbohydrate biosynthesis; gluconeogenesis. This is Fructose-1,6-bisphosphatase class 1 from Polynucleobacter asymbioticus (strain DSM 18221 / CIP 109841 / QLW-P1DMWA-1) (Polynucleobacter necessarius subsp. asymbioticus).